We begin with the raw amino-acid sequence, 320 residues long: o-succinylbenzoate synthase (320 aa).

The active-site Proton donor is the lysine 133. The Mg(2+) site is built by aspartate 161, glutamate 190, and aspartate 213. Lysine 235 (proton acceptor) is an active-site residue.

It belongs to the mandelate racemase/muconate lactonizing enzyme family. MenC type 1 subfamily. Requires a divalent metal cation as cofactor.

The enzyme catalyses (1R,6R)-6-hydroxy-2-succinyl-cyclohexa-2,4-diene-1-carboxylate = 2-succinylbenzoate + H2O. It participates in quinol/quinone metabolism; 1,4-dihydroxy-2-naphthoate biosynthesis; 1,4-dihydroxy-2-naphthoate from chorismate: step 4/7. The protein operates within quinol/quinone metabolism; menaquinone biosynthesis. Its function is as follows. Converts 2-succinyl-6-hydroxy-2,4-cyclohexadiene-1-carboxylate (SHCHC) to 2-succinylbenzoate (OSB). The sequence is that of o-succinylbenzoate synthase from Salmonella paratyphi B (strain ATCC BAA-1250 / SPB7).